A 464-amino-acid polypeptide reads, in one-letter code: MSVEKTNQSWGGRFSEPVDAFVARFTASVDFDKRLYRHDIMGSIAHATMLAKVGVLSDAERDAIIDGLQQIQAEIEAGSFDWRVDLEDVHMNIEARLTDRIGVTGKKLHTGRSRNDQVATDIRLWLRDEIDTILAEITRLQEGLLGLAEAEADTIMPGFTHLQTAQPVTFGHHLLAWFEMLGRDYERLVDCRKRVNRMPLGSAALAGTTYPIQREITCQLLGFDAVGGNSLDGVSDRDFAIEFCAAASLAMMHLSRFSEELVLWTSAQFQFIDLPDRFCTGSSIMPQKKNPDVPELVRGKSGRVFGALTGLLTLMKGQPLAYNKDNQEDKEPLFDTADTLHDSLRAFADMVPAIRPRREIMREAARRGFSTATDLADYLVRKGLPFRDCHEIVGHAVKYGVDSGKDLAEMSLDELRRFSEQIDADVFDVLTLEGSVNARDHIGGTAPNQVRAAVARGRKLLAQR.

Belongs to the lyase 1 family. Argininosuccinate lyase subfamily.

It is found in the cytoplasm. It catalyses the reaction 2-(N(omega)-L-arginino)succinate = fumarate + L-arginine. It participates in amino-acid biosynthesis; L-arginine biosynthesis; L-arginine from L-ornithine and carbamoyl phosphate: step 3/3. The sequence is that of Argininosuccinate lyase from Pseudomonas aeruginosa (strain LESB58).